The sequence spans 231 residues: Dephospho-CoA kinase domain-containing protein (231 aa).

Residues 3-207 form the DPCK domain; that stretch reads LVGLTGGIAS…RSLEYLPLRF (205 aa). 8–15 provides a ligand contact to ATP; it reads GGIASGKS.

This sequence belongs to the CoaE family.

The sequence is that of Dephospho-CoA kinase domain-containing protein (DCAKD) from Homo sapiens (Human).